A 529-amino-acid chain; its full sequence is DEP domain-containing protein 1B (529 aa).

Residues 24–108 (FRAKMPLRKH…DNRHLYRFPP (85 aa)) enclose the DEP domain. At Ser160 the chain carries Phosphoserine. Residues 201-393 (DSLEEVLDVK…FLMDNYQEIL (193 aa)) form the Rho-GAP domain. Ser436 is subject to Phosphoserine.

The sequence is that of DEP domain-containing protein 1B (DEPDC1B) from Homo sapiens (Human).